A 960-amino-acid polypeptide reads, in one-letter code: RNA polymerase II subunit A C-terminal domain phosphatase (960 aa).

The residue at position 1 (methionine 1) is an N-acetylmethionine. The FCP1 homology domain occupies 178-341 (HRNRKLVLMV…PPAARETQAR (164 aa)). The segment at 331–580 (APPAARETQA…EEDTDDDDHL (250 aa)) is disordered. Polar residues predominate over residues 439–448 (PGVQPTQGDA). Over residues 453–463 (LDFDLSSDSES) the composition is skewed to acidic residues. Serine 530 is subject to Phosphoserine. Over residues 547–556 (ESQNSEQSGV) the composition is skewed to polar residues. Acidic residues predominate over residues 566–578 (VGEEEEEDTDDDD). The BRCT domain occupies 619–718 (LKSKVLADVA…DKVEEQLFPL (100 aa)). Residues serine 664 and serine 730 each carry the phosphoserine modification. The residue at position 770 (lysine 770) is an N6-acetyllysine. Disordered regions lie at residues 770–834 (KLIR…MSEA) and 854–948 (DILG…ADEM). Phosphoserine is present on residues serine 830, serine 860, and serine 863. Residues 854–864 (DILGEGSDDSD) are compositionally biased toward acidic residues. A compositionally biased stretch (basic and acidic residues) spans 865–881 (IEKKKPEDQDNEQERAP). A compositionally biased stretch (acidic residues) spans 934-947 (SNDDEEGSSSEADE).

In terms of assembly, homodimer. Interacts with GTF2F1. Interacts with WDR77, SNRPB and SNRNP70. Phosphorylated. In the presence of TFIIF, the phosphorylated form has an increased CTD phosphatase activity. The phosphorylation is required for the physical interaction with GTF2F1.

The protein localises to the nucleus. Its subcellular location is the cytoplasm. The protein resides in the cytoskeleton. It localises to the microtubule organizing center. It is found in the centrosome. The protein localises to the spindle. Its subcellular location is the spindle pole. The protein resides in the midbody. The enzyme catalyses O-phospho-L-seryl-[protein] + H2O = L-seryl-[protein] + phosphate. It carries out the reaction O-phospho-L-threonyl-[protein] + H2O = L-threonyl-[protein] + phosphate. Its function is as follows. Processively dephosphorylates 'Ser-2' and 'Ser-5' of the heptad repeats YSPTSPS in the C-terminal domain of the largest RNA polymerase II subunit. This promotes the activity of RNA polymerase II. Plays a role in the exit from mitosis by dephosphorylating crucial mitotic substrates (USP44, CDC20 and WEE1) that are required for M-phase-promoting factor (MPF)/CDK1 inactivation. The protein is RNA polymerase II subunit A C-terminal domain phosphatase (Ctdp1) of Mus musculus (Mouse).